A 242-amino-acid polypeptide reads, in one-letter code: 1-(5-phosphoribosyl)-5-[(5-phosphoribosylamino)methylideneamino] imidazole-4-carboxamide isomerase (242 aa).

D8 functions as the Proton acceptor in the catalytic mechanism. The active-site Proton donor is D129.

The protein belongs to the HisA/HisF family.

The protein resides in the cytoplasm. It carries out the reaction 1-(5-phospho-beta-D-ribosyl)-5-[(5-phospho-beta-D-ribosylamino)methylideneamino]imidazole-4-carboxamide = 5-[(5-phospho-1-deoxy-D-ribulos-1-ylimino)methylamino]-1-(5-phospho-beta-D-ribosyl)imidazole-4-carboxamide. It functions in the pathway amino-acid biosynthesis; L-histidine biosynthesis; L-histidine from 5-phospho-alpha-D-ribose 1-diphosphate: step 4/9. This Beijerinckia indica subsp. indica (strain ATCC 9039 / DSM 1715 / NCIMB 8712) protein is 1-(5-phosphoribosyl)-5-[(5-phosphoribosylamino)methylideneamino] imidazole-4-carboxamide isomerase.